Here is an 824-residue protein sequence, read N- to C-terminus: Phenylalanine--tRNA ligase beta subunit (824 aa).

Residues 39 to 153 (SEQAKNVVIG…NIPPIGSNAV (115 aa)) enclose the tRNA-binding domain. Positions 414 to 507 (KKSISVNLRM…RLIGYDNFDS (94 aa)) constitute a B5 domain. Mg(2+)-binding residues include D485, D491, E494, and E495. Residues 730–823 (PTVPYMERDI…LKEKIKAELR (94 aa)) form the FDX-ACB domain.

Belongs to the phenylalanyl-tRNA synthetase beta subunit family. Type 1 subfamily. As to quaternary structure, tetramer of two alpha and two beta subunits. It depends on Mg(2+) as a cofactor.

Its subcellular location is the cytoplasm. The enzyme catalyses tRNA(Phe) + L-phenylalanine + ATP = L-phenylalanyl-tRNA(Phe) + AMP + diphosphate + H(+). The protein is Phenylalanine--tRNA ligase beta subunit of Prochlorococcus marinus (strain NATL2A).